A 620-amino-acid polypeptide reads, in one-letter code: Probable potassium transport system protein Kup (620 aa).

Helical transmembrane passes span valine 8 to tyrosine 28, valine 50 to isoleucine 70, methionine 102 to isoleucine 122, proline 136 to isoleucine 156, phenylalanine 168 to valine 188, leucine 211 to tyrosine 231, tryptophan 246 to isoleucine 266, methionine 284 to isoleucine 304, isoleucine 336 to phenylalanine 356, isoleucine 368 to leucine 388, methionine 393 to alanine 413, and isoleucine 415 to valine 435.

The protein belongs to the HAK/KUP transporter (TC 2.A.72) family.

The protein resides in the cell inner membrane. It catalyses the reaction K(+)(in) + H(+)(in) = K(+)(out) + H(+)(out). Transport of potassium into the cell. Likely operates as a K(+):H(+) symporter. The sequence is that of Probable potassium transport system protein Kup from Rhodopseudomonas palustris (strain HaA2).